Reading from the N-terminus, the 171-residue chain is Siroheme decarboxylase NirH subunit (171 aa).

This sequence belongs to the Ahb/Nir family. Probably forms a complex composed of NirD, NirL, NirG and NirH. All proteins are required for the total conversion of siroheme to didecarboxysiroheme.

It catalyses the reaction siroheme + 2 H(+) = 12,18-didecarboxysiroheme + 2 CO2. Its pathway is porphyrin-containing compound metabolism. Its function is as follows. Involved in heme d1 biosynthesis. Catalyzes the decarboxylation of siroheme into didecarboxysiroheme. This Pseudomonas aeruginosa (strain ATCC 15692 / DSM 22644 / CIP 104116 / JCM 14847 / LMG 12228 / 1C / PRS 101 / PAO1) protein is Siroheme decarboxylase NirH subunit.